A 25-amino-acid chain; its full sequence is Cytochrome c oxidase subunit 1 (25 aa).

The protein belongs to the heme-copper respiratory oxidase family. Cu(2+) is required as a cofactor. Requires heme as cofactor.

It is found in the cell inner membrane. It carries out the reaction 4 Fe(II)-[cytochrome c] + O2 + 8 H(+)(in) = 4 Fe(III)-[cytochrome c] + 2 H2O + 4 H(+)(out). The protein operates within energy metabolism; oxidative phosphorylation. In terms of biological role, subunit I and II form the functional core of the enzyme complex. Electrons originating in cytochrome c are transferred via heme a and Cu(A) to the binuclear center formed by heme a3 and Cu(B). This cytochrome c oxidase shows proton pump activity across the membrane in addition to the electron transfer. The protein is Cytochrome c oxidase subunit 1 (ctaD) of Paracoccus versutus (Thiobacillus versutus).